The chain runs to 116 residues: Non-specific lipid-transfer protein (116 aa).

The N-terminal stretch at 1-22 (MSLKLACVVVLCMVVGAPLAQG) is a signal peptide. 3 disulfides stabilise this stretch: cysteine 36/cysteine 52, cysteine 53/cysteine 98, and cysteine 73/cysteine 112.

The protein belongs to the plant LTP family.

Its function is as follows. Plant non-specific lipid-transfer proteins transfer phospholipids as well as galactolipids across membranes. May play a role in wax or cutin deposition in the cell walls of expanding epidermal cells and certain secretory tissues. The protein is Non-specific lipid-transfer protein of Gossypium hirsutum (Upland cotton).